The chain runs to 421 residues: 4-hydroxy-3-methylbut-2-en-1-yl diphosphate synthase (flavodoxin) (421 aa).

Positions 311, 314, 357, and 364 each coordinate [4Fe-4S] cluster.

The protein belongs to the IspG family. It depends on [4Fe-4S] cluster as a cofactor.

The enzyme catalyses (2E)-4-hydroxy-3-methylbut-2-enyl diphosphate + oxidized [flavodoxin] + H2O + 2 H(+) = 2-C-methyl-D-erythritol 2,4-cyclic diphosphate + reduced [flavodoxin]. The protein operates within isoprenoid biosynthesis; isopentenyl diphosphate biosynthesis via DXP pathway; isopentenyl diphosphate from 1-deoxy-D-xylulose 5-phosphate: step 5/6. Functionally, converts 2C-methyl-D-erythritol 2,4-cyclodiphosphate (ME-2,4cPP) into 1-hydroxy-2-methyl-2-(E)-butenyl 4-diphosphate. The protein is 4-hydroxy-3-methylbut-2-en-1-yl diphosphate synthase (flavodoxin) of Xanthomonas axonopodis pv. citri (strain 306).